We begin with the raw amino-acid sequence, 151 residues long: Macrodomain Ter protein (151 aa).

It belongs to the MatP family. In terms of assembly, homodimer.

It is found in the cytoplasm. Required for spatial organization of the terminus region of the chromosome (Ter macrodomain) during the cell cycle. Prevents early segregation of duplicated Ter macrodomains during cell division. Binds specifically to matS, which is a 13 bp signature motif repeated within the Ter macrodomain. The protein is Macrodomain Ter protein of Cronobacter sakazakii (strain ATCC BAA-894) (Enterobacter sakazakii).